Consider the following 557-residue polypeptide: Probable transcription factor sol4 (557 aa).

A fungal transcription factor domain region spans residues 26–186 (IQYFFEDINW…EREMRRRMFC (161 aa)). Residues 463-490 (SGTQTRSMPSTETLTYNSSSSTSYGDGH) are disordered. The segment covering 472 to 485 (STETLTYNSSSSTS) has biased composition (low complexity).

It localises to the nucleus. Functionally, probable transcription factor that regulates the expression of the gene cluster that mediates the biosynthesis of the phytotoxin solanapyrone, a causal agent of early blight disease of potato and tomato. The protein is Probable transcription factor sol4 (sol4) of Alternaria solani.